A 166-amino-acid polypeptide reads, in one-letter code: 2-amino-4-hydroxy-6-hydroxymethyldihydropteridine pyrophosphokinase (166 aa).

The protein belongs to the HPPK family.

It carries out the reaction 6-hydroxymethyl-7,8-dihydropterin + ATP = (7,8-dihydropterin-6-yl)methyl diphosphate + AMP + H(+). It functions in the pathway cofactor biosynthesis; tetrahydrofolate biosynthesis; 2-amino-4-hydroxy-6-hydroxymethyl-7,8-dihydropteridine diphosphate from 7,8-dihydroneopterin triphosphate: step 4/4. Functionally, catalyzes the transfer of pyrophosphate from adenosine triphosphate (ATP) to 6-hydroxymethyl-7,8-dihydropterin, an enzymatic step in folate biosynthesis pathway. In Streptococcus pyogenes serotype M1, this protein is 2-amino-4-hydroxy-6-hydroxymethyldihydropteridine pyrophosphokinase (folK).